The primary structure comprises 313 residues: tRNA dimethylallyltransferase (313 aa).

9–16 (GPTATGKS) is an ATP binding site. 11-16 (TATGKS) contacts substrate.

The protein belongs to the IPP transferase family. As to quaternary structure, monomer. Mg(2+) is required as a cofactor.

The catalysed reaction is adenosine(37) in tRNA + dimethylallyl diphosphate = N(6)-dimethylallyladenosine(37) in tRNA + diphosphate. Catalyzes the transfer of a dimethylallyl group onto the adenine at position 37 in tRNAs that read codons beginning with uridine, leading to the formation of N6-(dimethylallyl)adenosine (i(6)A). The sequence is that of tRNA dimethylallyltransferase from Nocardia farcinica (strain IFM 10152).